The following is a 436-amino-acid chain: Serine--tRNA ligase (436 aa).

241–243 contacts L-serine; it reads TSE. 272 to 274 contributes to the ATP binding site; it reads RAE. Glu295 provides a ligand contact to L-serine. Residue 359–362 coordinates ATP; sequence EISS. Ser395 is an L-serine binding site.

It belongs to the class-II aminoacyl-tRNA synthetase family. Type-1 seryl-tRNA synthetase subfamily. In terms of assembly, homodimer. The tRNA molecule binds across the dimer.

The protein resides in the cytoplasm. It catalyses the reaction tRNA(Ser) + L-serine + ATP = L-seryl-tRNA(Ser) + AMP + diphosphate + H(+). It carries out the reaction tRNA(Sec) + L-serine + ATP = L-seryl-tRNA(Sec) + AMP + diphosphate + H(+). Its pathway is aminoacyl-tRNA biosynthesis; selenocysteinyl-tRNA(Sec) biosynthesis; L-seryl-tRNA(Sec) from L-serine and tRNA(Sec): step 1/1. In terms of biological role, catalyzes the attachment of serine to tRNA(Ser). Is also able to aminoacylate tRNA(Sec) with serine, to form the misacylated tRNA L-seryl-tRNA(Sec), which will be further converted into selenocysteinyl-tRNA(Sec). This chain is Serine--tRNA ligase, found in Beijerinckia indica subsp. indica (strain ATCC 9039 / DSM 1715 / NCIMB 8712).